The sequence spans 313 residues: MTQWYPASPALWQGRDDSIEAPDARRLFQAITRSEAFSPENWQQKIALMGFACDEGVKRNAGRPGAAGGPDALRKALANMASHQGHERLVDLGNWVAPTPDLEGAQQALRDAVSRCLRAGMRTLVLGGGHETAFGHGAGVLDAFAQESVGIINLDAHLDLRQTDRATSGTPFRQLAQLCDAQSRAFHYACFGVSRAANTQALWREAQWRNVTVVEDLDCHDALAQMTQFIDKVDKIYLTIDLDVLPVWEMPAVSAPAALGVPLIQVLRLIDPVCRSGKLQAADLVEFNPRFDEDGAAARVAARLGWQIAHWWR.

Positions 130, 155, 157, 159, 241, and 243 each coordinate Mn(2+).

It belongs to the arginase family. The cofactor is Mn(2+).

It carries out the reaction N-formimidoyl-L-glutamate + H2O = formamide + L-glutamate. Its pathway is amino-acid degradation; L-histidine degradation into L-glutamate; L-glutamate from N-formimidoyl-L-glutamate (hydrolase route): step 1/1. Catalyzes the conversion of N-formimidoyl-L-glutamate to L-glutamate and formamide. The polypeptide is Formimidoylglutamase (Salmonella paratyphi A (strain ATCC 9150 / SARB42)).